The chain runs to 257 residues: Receptor expression-enhancing protein 4 (257 aa).

2 helical membrane passes run 1-21 and 42-62; these read MVSW…YPAY and WIVF…ISWF. Residues Ser-152 and Ser-194 each carry the phosphoserine modification. Residues 177–257 form a disordered region; that stretch reads VPRRRPPIGY…KKAMPSDMDS (81 aa). A Phosphothreonine modification is found at Thr-196. Phosphoserine is present on residues Ser-202 and Ser-253.

Belongs to the DP1 family.

The protein localises to the endoplasmic reticulum membrane. Its function is as follows. Microtubule-binding protein required to ensure proper cell division and nuclear envelope reassembly by sequestering the endoplasmic reticulum away from chromosomes during mitosis. Probably acts by clearing the endoplasmic reticulum membrane from metaphase chromosomes. The protein is Receptor expression-enhancing protein 4 (Reep4) of Mus musculus (Mouse).